The primary structure comprises 245 residues: Eukaryotic translation initiation factor 6 (245 aa).

Belongs to the eIF-6 family. As to quaternary structure, monomer. Associates with the 60S ribosomal subunit.

It is found in the cytoplasm. The protein localises to the nucleus. The protein resides in the nucleolus. Binds to the 60S ribosomal subunit and prevents its association with the 40S ribosomal subunit to form the 80S initiation complex in the cytoplasm. May also be involved in ribosome biogenesis. The polypeptide is Eukaryotic translation initiation factor 6 (Ostreococcus lucimarinus (strain CCE9901)).